The chain runs to 361 residues: Mycothiol acetyltransferase (361 aa).

N-acetyltransferase domains follow at residues 25–173 (PRVR…LPGS) and 195–361 (VTVL…AWKF). Residue Glu59 participates in 1D-myo-inositol 2-(L-cysteinylamino)-2-deoxy-alpha-D-glucopyranoside binding. 98–100 (LAV) contributes to the acetyl-CoA binding site. The 1D-myo-inositol 2-(L-cysteinylamino)-2-deoxy-alpha-D-glucopyranoside site is built by Glu229, Lys280, and Glu295. Residues 299–301 (IGL) and 306–312 (QGRGLGR) each bind acetyl-CoA. Tyr333 lines the 1D-myo-inositol 2-(L-cysteinylamino)-2-deoxy-alpha-D-glucopyranoside pocket. 338–343 (NAPAVH) contacts acetyl-CoA.

The protein belongs to the acetyltransferase family. MshD subfamily. In terms of assembly, monomer.

It carries out the reaction 1D-myo-inositol 2-(L-cysteinylamino)-2-deoxy-alpha-D-glucopyranoside + acetyl-CoA = mycothiol + CoA + H(+). Catalyzes the transfer of acetyl from acetyl-CoA to desacetylmycothiol (Cys-GlcN-Ins) to form mycothiol. The chain is Mycothiol acetyltransferase from Corynebacterium kroppenstedtii (strain DSM 44385 / JCM 11950 / CIP 105744 / CCUG 35717).